Here is a 258-residue protein sequence, read N- to C-terminus: MTPLDLWLSRSIPMCLLLQSLVLMVLCFPSASTCPKGCTCQRSESPPHGLNVTCSLSRLKEIPPDVPPDTQLLQLDRNHISLVPDRIFHGLRMLRRLNLSHNAVETLGEGAFIGLEGSLEVLDLSYNRITSVHKDAFARLKARVVVDNNPWHCDCALQQALGGMAHNHERVLCRSSELRDQEGQPFMAVDADLCNLAKRTTDYAMLVTMFGWFAMVISYVVYYVRQNQEDARRHLEYLKSLPSKPKKPDEPEDISTVV.

An N-terminal signal peptide occupies residues 1-33 (MTPLDLWLSRSIPMCLLLQSLVLMVLCFPSAST). An LRRNT domain is found at 34 to 68 (CPKGCTCQRSESPPHGLNVTCSLSRLKEIPPDVPP). An N-linked (GlcNAc...) asparagine glycan is attached at Asn-51. LRR repeat units follow at residues 69 to 90 (DTQL…IFHG), 93 to 114 (MLRR…AFIG), and 118 to 139 (SLEV…AFAR). Asn-98 carries N-linked (GlcNAc...) asparagine glycosylation. The LRRCT domain occupies 149-196 (NPWHCDCALQQALGGMAHNHERVLCRSSELRDQEGQPFMAVDADLCNL). A helical transmembrane segment spans residues 204–224 (AMLVTMFGWFAMVISYVVYYV).

Belongs to the LRRC3 family.

The protein localises to the membrane. The sequence is that of Leucine-rich repeat-containing protein 3B (lrrc3b) from Danio rerio (Zebrafish).